Reading from the N-terminus, the 192-residue chain is Probable GTP-binding protein EngB (192 aa).

Residues 22–192 (SLPEIVFVGR…LLEQLENYTG (171 aa)) enclose the EngB-type G domain. GTP-binding positions include 30–37 (GRSNVGKS), 57–61 (GKTQL), 75–78 (DLPG), 142–145 (TKYD), and 172–174 (YSA). Residues Ser37 and Thr59 each coordinate Mg(2+).

This sequence belongs to the TRAFAC class TrmE-Era-EngA-EngB-Septin-like GTPase superfamily. EngB GTPase family. Mg(2+) serves as cofactor.

Functionally, necessary for normal cell division and for the maintenance of normal septation. The polypeptide is Probable GTP-binding protein EngB (Prosthecochloris aestuarii (strain DSM 271 / SK 413)).